Reading from the N-terminus, the 402-residue chain is Putative F-box/kelch-repeat protein At1g61540 (402 aa).

In terms of domain architecture, F-box spans 24-70; the sequence is PISIMSLPYDLLLNCFSLVSRLYYPTLSLVSKTFRSIITSRELYEIR. 3 Kelch repeats span residues 135-189, 191-240, and 246-293; these read NIYK…CEVD, KIYI…EVKS, and KIYM…VVDN.

In Arabidopsis thaliana (Mouse-ear cress), this protein is Putative F-box/kelch-repeat protein At1g61540.